Here is a 75-residue protein sequence, read N- to C-terminus: Small capsomere-interacting protein (75 aa).

It belongs to the herpesviridae small capsomere-interacting protein family. In terms of assembly, interacts with the major capsid protein/MCP.

The protein localises to the virion. It localises to the host nucleus. Participates in the assembly of the infectious particles by decorating the outer surface of the capsid shell and thus forming a layer between the capsid and the tegument. Complexes composed of the major capsid protein and small capsomere-interacting protein/SCP assemble together in the host cytoplasm and are translocated to the nucleus, where they accumulate and participate in capsid assembly. In Homo sapiens (Human), this protein is Small capsomere-interacting protein.